The primary structure comprises 149 residues: Nucleoside diphosphate kinase (149 aa).

Lysine 9, phenylalanine 57, arginine 85, threonine 91, arginine 102, and asparagine 112 together coordinate ATP. Histidine 115 acts as the Pros-phosphohistidine intermediate in catalysis.

This sequence belongs to the NDK family. In terms of assembly, homotetramer. Mg(2+) serves as cofactor.

It is found in the cytoplasm. It catalyses the reaction a 2'-deoxyribonucleoside 5'-diphosphate + ATP = a 2'-deoxyribonucleoside 5'-triphosphate + ADP. The catalysed reaction is a ribonucleoside 5'-diphosphate + ATP = a ribonucleoside 5'-triphosphate + ADP. Its function is as follows. Major role in the synthesis of nucleoside triphosphates other than ATP. The ATP gamma phosphate is transferred to the NDP beta phosphate via a ping-pong mechanism, using a phosphorylated active-site intermediate. The protein is Nucleoside diphosphate kinase of Roseiflexus sp. (strain RS-1).